The primary structure comprises 92 residues: Pyrimidine/purine nucleoside phosphorylase (92 aa).

The protein belongs to the nucleoside phosphorylase PpnP family.

The enzyme catalyses a purine D-ribonucleoside + phosphate = a purine nucleobase + alpha-D-ribose 1-phosphate. The catalysed reaction is adenosine + phosphate = alpha-D-ribose 1-phosphate + adenine. It carries out the reaction cytidine + phosphate = cytosine + alpha-D-ribose 1-phosphate. It catalyses the reaction guanosine + phosphate = alpha-D-ribose 1-phosphate + guanine. The enzyme catalyses inosine + phosphate = alpha-D-ribose 1-phosphate + hypoxanthine. The catalysed reaction is thymidine + phosphate = 2-deoxy-alpha-D-ribose 1-phosphate + thymine. It carries out the reaction uridine + phosphate = alpha-D-ribose 1-phosphate + uracil. It catalyses the reaction xanthosine + phosphate = alpha-D-ribose 1-phosphate + xanthine. In terms of biological role, catalyzes the phosphorolysis of diverse nucleosides, yielding D-ribose 1-phosphate and the respective free bases. Can use uridine, adenosine, guanosine, cytidine, thymidine, inosine and xanthosine as substrates. Also catalyzes the reverse reactions. The polypeptide is Pyrimidine/purine nucleoside phosphorylase (Rhodopirellula baltica (strain DSM 10527 / NCIMB 13988 / SH1)).